The chain runs to 208 residues: Guanylate kinase (208 aa).

The Guanylate kinase-like domain occupies 4 to 182; that stretch reads GQLYIISAPS…ALEELKSVFR (179 aa). Residue 11–18 participates in ATP binding; it reads APSGAGKT.

It belongs to the guanylate kinase family.

It localises to the cytoplasm. It catalyses the reaction GMP + ATP = GDP + ADP. Its function is as follows. Essential for recycling GMP and indirectly, cGMP. The sequence is that of Guanylate kinase from Hahella chejuensis (strain KCTC 2396).